Consider the following 328-residue polypeptide: Fructosamine deglycase FrlB (328 aa).

2 SIS domains span residues 15 to 153 (FLQD…VLEN) and 181 to 311 (NAKQ…ELAE).

In terms of assembly, homooctamer.

In terms of biological role, catalyzes the conversion of a range of fructosamine 6-phosphates to glucose 6-phosphate and a free amino acid. The chain is Fructosamine deglycase FrlB (frlB) from Bacillus subtilis (strain 168).